The primary structure comprises 518 residues: Putative cytochrome P450 CYP13A6 (518 aa).

Residue Cys463 coordinates heme.

This sequence belongs to the cytochrome P450 family. Heme is required as a cofactor.

Its function is as follows. Cytochromes P450 are a group of heme-thiolate monooxygenases. They oxidize a variety of structurally unrelated compounds, including steroids, fatty acids, and xenobiotics. The sequence is that of Putative cytochrome P450 CYP13A6 (cyp-13A6) from Caenorhabditis elegans.